Here is a 510-residue protein sequence, read N- to C-terminus: MSVSALNPTRLPGSLSGLLQVAGLLGLLLLLLKAAQLYLHRQWLLRALQQFPCPPFHWLLGHSREFQNGHELQVMLKWVEKFPSACPRWLWGSRAHLLIYDPDYMKVILGRSDPKAQGSYRFLAPWIGYGLLLLNGQTWFQHRRMLTPAFHYDILKPYVGLMADSVQIMLDKWEQLVSQDSSLEVFQDISLMTLDTIMKCAFSHQGSVQLDRNSQSYIQAVGDLNNLFFSRVRNVFHQSDTIYRLSPEGRLSHRACQLAHEHTDRVIQQRKAQLQQEGELEKVRRKRRLDFLDVLLFAKMENGSSLSDQDLRAEVDTFMFEGHDTTASGISWIFYALATHPEHQHRCREEIQGLLGDGASITWEHLDQMPYTTMCIKEALRLYPPVPGVGRQLSSPVTFPDGRSLPKGVIVTLSIYALHHNPKVWPNPEVFDPFPFAPGSARHSHAFLPFSGGPRNCIGKQFAMNELKVAVALTLVRFELLPDPKRVPDQKPRLVLKSSNGIHLRLRKLR.

Positions 1 to 4 (MSVS) are excised as a propeptide. E321 and C457 together coordinate heme.

This sequence belongs to the cytochrome P450 family. Heme serves as cofactor. Liver; kidney.

It localises to the endoplasmic reticulum membrane. It is found in the microsome membrane. It catalyses the reaction an omega-methyl-long-chain fatty acid + reduced [NADPH--hemoprotein reductase] + O2 = an omega-hydroxy-long-chain fatty acid + oxidized [NADPH--hemoprotein reductase] + H2O + H(+). In terms of biological role, cytochromes P450 are a group of heme-thiolate monooxygenases. In liver microsomes, this enzyme is involved in an NADPH-dependent electron transport pathway. It oxidizes a variety of structurally unrelated compounds, including steroids, fatty acids, and xenobiotics. Functionally, the kidney P-450 system is rather specialized for the omega-hydroxylation of fatty acids. Both P450-KA1 and P450-KA2 catalyze the omega- and (omega-1)-hydroxylation of various fatty acids with no drug-metabolizing activity, and hydroxylate prostaglandin A1 and A2 solely at the omega-position. In Oryctolagus cuniculus (Rabbit), this protein is Cytochrome P450 4A6 (CYP4A6).